The sequence spans 392 residues: ESX-1 secretion-associated protein EspA (392 aa).

The interval 302–392 (TRQALRPRAD…GQKVLVRNVV (91 aa)) is disordered. Positions 334–344 (QGMGGPVGMGG) are enriched in gly residues.

In terms of assembly, homodimer; disulfide-linked. An artificial EsxB-EsxA heterodimer interacts with EspA.

The protein resides in the secreted. Required for secretion of EsxA (ESAT-6) and EsxB (CFP-10) and for virulence. Involved in translocation of bacteria from the host (human) phagolysosome to the host cytoplasm. The chain is ESX-1 secretion-associated protein EspA from Mycobacterium tuberculosis (strain ATCC 25618 / H37Rv).